A 367-amino-acid polypeptide reads, in one-letter code: Histidinol-phosphate aminotransferase (367 aa).

Residue K222 is modified to N6-(pyridoxal phosphate)lysine.

This sequence belongs to the class-II pyridoxal-phosphate-dependent aminotransferase family. Histidinol-phosphate aminotransferase subfamily. It depends on pyridoxal 5'-phosphate as a cofactor.

The catalysed reaction is L-histidinol phosphate + 2-oxoglutarate = 3-(imidazol-4-yl)-2-oxopropyl phosphate + L-glutamate. It participates in amino-acid biosynthesis; L-histidine biosynthesis; L-histidine from 5-phospho-alpha-D-ribose 1-diphosphate: step 7/9. In Methanosphaera stadtmanae (strain ATCC 43021 / DSM 3091 / JCM 11832 / MCB-3), this protein is Histidinol-phosphate aminotransferase.